Here is a 609-residue protein sequence, read N- to C-terminus: Alpha-glucosides permease MPH2 (609 aa).

Over 1-106 the chain is Cytoplasmic; the sequence is MKNLSFLINR…AAAWSLLVST (106 aa). The helical transmembrane segment at 107–127 threads the bilayer; it reads TLIMEGYDTAILGAFYALPIF. Topologically, residues 128–142 are extracellular; sequence QRKFGSQNDKTGEWE. A helical membrane pass occupies residues 143–163; the sequence is ISASWQIGLTLCYMAGEIVGL. Over 164–178 the chain is Cytoplasmic; the sequence is QLTGPSVDLVGNRYT. The chain crosses the membrane as a helical span at residues 179-199; sequence LIIALFFLAAFTFILYFCNSL. Position 200 (G200) is a topological domain, extracellular. The helical transmembrane segment at 201–221 threads the bilayer; it reads MIAVGQALCGMPWGCFQCLTV. The Cytoplasmic segment spans residues 222-234; sequence SYASEICPLALRY. Residues 235 to 255 traverse the membrane as a helical segment; it reads YLTTYSNLCWLFGQLFAAGIM. Topologically, residues 256–270 are extracellular; that stretch reads KNSQKKYADSELGYK. The helical transmembrane segment at 271 to 291 threads the bilayer; sequence LPFALQWILPVPLALGIFFAP. Residues 292 to 363 are Cytoplasmic-facing; it reads ESPWWLVKKG…EDKINRRRTR (72 aa). Residues 364-384 traverse the membrane as a helical segment; sequence ITCLCWAGQATCGSILIGYST. The Extracellular segment spans residues 385–397; sequence YFYEKAGVSTEMS. Residues 398–418 traverse the membrane as a helical segment; the sequence is FTFSIIQYCLGICATFLSWWA. Residues 419 to 426 are Cytoplasmic-facing; that stretch reads SKYFGRYD. A helical membrane pass occupies residues 427-447; that stretch reads LYAFGLAFQTIVFFIIGGLGC. Residues 448-459 are Extracellular-facing; the sequence is SSTHGSKMGSGS. A helical membrane pass occupies residues 460-480; sequence LLMAVAFFYNLGIAPVVFCLV. At 481 to 492 the chain is on the cytoplasmic side; sequence SEMPSSRLRTKT. A helical membrane pass occupies residues 493–513; it reads IILARNTYNVVSIICSVLILY. Residues 514-525 are Extracellular-facing; the sequence is QLNSKKWNWGAK. Residues 526-546 form a helical membrane-spanning segment; that stretch reads SGFFWGVLCFCTLIWAVVDLP. Over 547–609 the chain is Cytoplasmic; sequence ETAGKTFVEI…QRNSNVSHHL (63 aa).

This sequence belongs to the major facilitator superfamily. Sugar transporter (TC 2.A.1.1) family.

It localises to the cell membrane. In terms of biological role, high-affinity uptake of maltose and maltotriose. Also transports alpha-methylglucoside, glucose and turanose but not melezitose or trehalose. The chain is Alpha-glucosides permease MPH2 (MPH2) from Saccharomyces cerevisiae (strain ATCC 204508 / S288c) (Baker's yeast).